The sequence spans 395 residues: Chaperone protein DnaJ 2 (395 aa).

The J domain occupies 10 to 75 (DYYADLGVSK…TKRREYDDLK (66 aa)). The CR-type zinc finger occupies 165 to 242 (GTTIPVELTG…CRGRGTVRRT (78 aa)). Positions 178, 181, 194, 197, 216, 219, 230, and 233 each coordinate Zn(2+). CXXCXGXG motif repeat units lie at residues 178-185 (CNTCHGSG), 194-201 (CGQCNGSG), 216-223 (CTNCGGTG), and 230-237 (CVDCRGRG).

This sequence belongs to the DnaJ family. As to quaternary structure, homodimer. It depends on Zn(2+) as a cofactor.

Its subcellular location is the cytoplasm. Functionally, participates actively in the response to hyperosmotic and heat shock by preventing the aggregation of stress-denatured proteins and by disaggregating proteins, also in an autonomous, DnaK-independent fashion. Unfolded proteins bind initially to DnaJ; upon interaction with the DnaJ-bound protein, DnaK hydrolyzes its bound ATP, resulting in the formation of a stable complex. GrpE releases ADP from DnaK; ATP binding to DnaK triggers the release of the substrate protein, thus completing the reaction cycle. Several rounds of ATP-dependent interactions between DnaJ, DnaK and GrpE are required for fully efficient folding. Also involved, together with DnaK and GrpE, in the DNA replication of plasmids through activation of initiation proteins. This is Chaperone protein DnaJ 2 from Corynebacterium efficiens (strain DSM 44549 / YS-314 / AJ 12310 / JCM 11189 / NBRC 100395).